Here is a 308-residue protein sequence, read N- to C-terminus: GTP-binding protein RAD (308 aa).

The segment covering 1–15 has biased composition (gly residues); the sequence is MTLNGGSGASGSRGA. The disordered stretch occupies residues 1–86; the sequence is MTLNGGSGAS…SDSLSSGGSG (86 aa). Arg-24 is subject to Omega-N-methylarginine. Position 26 is a phosphoserine (Ser-26). Over residues 57 to 82 the composition is skewed to low complexity; that stretch reads ATTAAGTRTQGQRLDWPEGSSDSLSS. Residues 98–105 and 203–206 contribute to the GTP site; these read GAPGVGKS and NKSD. The calmodulin-binding stretch occupies residues 278-297; that stretch reads AKRFLGRIVARNSRKMAFRA.

It belongs to the small GTPase superfamily. RGK family. Interacts with Calmodulin preferentially in the inactive, GDP-bound form. Interacts with CAMK2D. Interacts with CACNB2; interaction may be involved in beta-adrenergic regulation of heart rate and contractile force. Interaction with CACNB2 regulates the trafficking of CACNA1C to the cell membrane. In terms of processing, phosphorylation at Ser-26, Ser-39, Ser-273 and Ser-301 may be involved in regulating inhibition of voltage-gated L-type Ca(2+) channels.

The protein localises to the cell membrane. Functionally, may regulate basal voltage-dependent L-type Ca(2+) currents and be required for beta-adrenergic augmentation of Ca(2+) influx in cardiomyocytes, thereby regulating increases in heart rate and contractile force. May play an important role in cardiac antiarrhythmia via the strong suppression of voltage-dependent L-type Ca(2+) currents. Regulates voltage-gated L-type calcium channel subunit alpha-1C trafficking to the cell membrane. Inhibits cardiac hypertrophy through the calmodulin-dependent kinase II (CaMKII) pathway. Inhibits phosphorylation and activation of CAMK2D. In Mus musculus (Mouse), this protein is GTP-binding protein RAD (Rrad).